We begin with the raw amino-acid sequence, 467 residues long: Dimethylamine methyltransferase MtbB1 (467 aa).

Position 356 (pyrrolysine 356) is a non-standard amino acid, pyrrolysine.

This sequence belongs to the dimethylamine methyltransferase family.

The enzyme catalyses Co(I)-[dimethylamine-specific corrinoid protein] + dimethylamine + H(+) = methyl-Co(III)-[dimethylamine-specific corrinoid protein] + methylamine. Its pathway is one-carbon metabolism; methanogenesis from dimethylamine. Functionally, catalyzes the transfer of a methyl group from dimethylamine to the corrinoid cofactor of MtbC. The protein is Dimethylamine methyltransferase MtbB1 (mtbB1) of Methanosarcina acetivorans (strain ATCC 35395 / DSM 2834 / JCM 12185 / C2A).